A 171-amino-acid polypeptide reads, in one-letter code: Putative antiporter subunit mnhG2 (171 aa).

The next 3 membrane-spanning stretches (helical) occupy residues 11–31, 51–71, and 72–92; these read IAAL…IGIV, VLLT…FFSV, and RLLL…HLVA. The span at 144–156 shows a compositional bias: basic and acidic residues; sequence DVQKQRQKEKQQE. The disordered stretch occupies residues 144–171; it reads DVQKQRQKEKQQEENIESLSEARRETKD.

This sequence belongs to the CPA3 antiporters (TC 2.A.63) subunit G family. As to quaternary structure, may form a heterooligomeric complex that consists of seven subunits: mnhA2, mnhB2, mnhC2, mnhD2, mnhE2, mnhF2 and mnhG2.

It localises to the cell membrane. The chain is Putative antiporter subunit mnhG2 (mnhG2) from Staphylococcus haemolyticus (strain JCSC1435).